We begin with the raw amino-acid sequence, 279 residues long: Armadillo repeat-containing protein 1 (279 aa).

The ARM repeat unit spans residues 36–78 (GCLPGLILFLDHPSPPVVHSALLALRYLAECRANREKMKGELG). Residues 236–257 (EYLPEDESPSKEQDKAVSRVGS) form a disordered region. Over residues 243-252 (SPSKEQDKAV) the composition is skewed to basic and acidic residues.

As to quaternary structure, interacts with mitochondrial contact site and cristae organizing system (MICOS) complex components IMMT/MIC60 and MICOS10/MIC10. Interacts with mitochondrial outer membrane sorting assembly machinery (SAM) complex components SAMM50 and MTX1.

Its subcellular location is the cytoplasm. The protein localises to the mitochondrion. It localises to the mitochondrion outer membrane. Its function is as follows. In association with mitochondrial contact site and cristae organizing system (MICOS) complex components and mitochondrial outer membrane sorting assembly machinery (SAM) complex components may regulate mitochondrial dynamics playing a role in determining mitochondrial length, distribution and motility. The sequence is that of Armadillo repeat-containing protein 1 (ARMC1) from Gallus gallus (Chicken).